The sequence spans 255 residues: MIFDRRRYGKDNYTYLLAAGGDAALVDPGDPDAALALAAAHGVRPRWILHTHGHADHTGGTAAVARALGAQVLGHGGDAARYRPDVDLAGRAEVALGALALRVHPVPGHTPGSVLLEWEGRLLTGDTLFWAGCGNCRHGGDPARLAESFLGPIARLDGGLEVHPGHDYAAPNLAFALALEPDGAAARARLAEVEAAHAAGLEPAPSTLAGERAVNPFLRLDAPGVAAAVARAEPSAAAAGPARRFVALRALRDRA.

The Zn(2+) site is built by histidine 52, histidine 54, aspartate 56, histidine 57, histidine 109, aspartate 126, and histidine 166.

The protein belongs to the metallo-beta-lactamase superfamily. Glyoxalase II family. In terms of assembly, monomer. Zn(2+) is required as a cofactor.

It carries out the reaction an S-(2-hydroxyacyl)glutathione + H2O = a 2-hydroxy carboxylate + glutathione + H(+). The protein operates within secondary metabolite metabolism; methylglyoxal degradation; (R)-lactate from methylglyoxal: step 2/2. In terms of biological role, thiolesterase that catalyzes the hydrolysis of S-D-lactoyl-glutathione to form glutathione and D-lactic acid. The chain is Hydroxyacylglutathione hydrolase from Anaeromyxobacter dehalogenans (strain 2CP-C).